The sequence spans 351 residues: Uroporphyrinogen decarboxylase (351 aa).

Substrate contacts are provided by residues 26 to 30 (RQAGR), Asp-76, Tyr-153, Ser-208, and His-323.

Belongs to the uroporphyrinogen decarboxylase family. As to quaternary structure, homodimer.

It localises to the cytoplasm. It catalyses the reaction uroporphyrinogen III + 4 H(+) = coproporphyrinogen III + 4 CO2. The protein operates within porphyrin-containing compound metabolism; protoporphyrin-IX biosynthesis; coproporphyrinogen-III from 5-aminolevulinate: step 4/4. In terms of biological role, catalyzes the decarboxylation of four acetate groups of uroporphyrinogen-III to yield coproporphyrinogen-III. The protein is Uroporphyrinogen decarboxylase of Prochlorococcus marinus (strain MIT 9211).